A 199-amino-acid chain; its full sequence is Probable adenine phosphoribosyltransferase (199 aa).

It belongs to the purine/pyrimidine phosphoribosyltransferase family. In terms of assembly, homodimer.

Its subcellular location is the cytoplasm. The catalysed reaction is AMP + diphosphate = 5-phospho-alpha-D-ribose 1-diphosphate + adenine. It functions in the pathway purine metabolism; AMP biosynthesis via salvage pathway; AMP from adenine: step 1/1. Functionally, catalyzes a salvage reaction resulting in the formation of AMP, that is energically less costly than de novo synthesis. This Dictyostelium discoideum (Social amoeba) protein is Probable adenine phosphoribosyltransferase (aprt).